Reading from the N-terminus, the 324-residue chain is Polyketide biosynthesis acyltransferase homolog BaeD (324 aa).

Serine 99 is an active-site residue.

The protein resides in the cytoplasm. It functions in the pathway antibiotic biosynthesis; bacillaene biosynthesis. In terms of biological role, probably involved in some intermediate steps for the synthesis of the antibiotic polyketide bacillaene which is involved in secondary metabolism. The polypeptide is Polyketide biosynthesis acyltransferase homolog BaeD (baeD) (Bacillus velezensis (strain DSM 23117 / BGSC 10A6 / LMG 26770 / FZB42) (Bacillus amyloliquefaciens subsp. plantarum)).